The chain runs to 360 residues: Epoxyqueuosine reductase (360 aa).

The active-site Proton donor is the D142. A 4Fe-4S ferredoxin-type domain is found at 187 to 216; sequence APTEPVTAHCGSCQACMDVCPTQAIVAPHR. 8 residues coordinate [4Fe-4S] cluster: C196, C199, C202, C206, C222, C249, C252, and C256.

The protein belongs to the QueG family. As to quaternary structure, monomer. Cob(II)alamin serves as cofactor. Requires [4Fe-4S] cluster as cofactor.

The protein localises to the cytoplasm. The catalysed reaction is epoxyqueuosine(34) in tRNA + AH2 = queuosine(34) in tRNA + A + H2O. Its pathway is tRNA modification; tRNA-queuosine biosynthesis. In terms of biological role, catalyzes the conversion of epoxyqueuosine (oQ) to queuosine (Q), which is a hypermodified base found in the wobble positions of tRNA(Asp), tRNA(Asn), tRNA(His) and tRNA(Tyr). This is Epoxyqueuosine reductase from Alicycliphilus denitrificans (strain DSM 14773 / CIP 107495 / K601).